The sequence spans 436 residues: S-locus-specific glycoprotein S6 (436 aa).

A signal peptide spans 1–31; the sequence is MKGVRKPYDNSYTLSFLLVFFVLILFCPAFS. Positions 34 to 156 constitute a Bulb-type lectin domain; sequence TLSSTESLRI…SNNDASEYLW (123 aa). Asn-46, Asn-64, Asn-114, Asn-121, Asn-245, Asn-261, and Asn-390 each carry an N-linked (GlcNAc...) asparagine glycan. The PAN domain maps to 351–431; it reads CSGDGFTRMK…HGQDLYVRLA (81 aa). 2 disulfide bridges follow: Cys-381-Cys-406 and Cys-389-Cys-391.

In terms of tissue distribution, stigma.

Its function is as follows. Involved in sporophytic self-incompatibility system (the inability of flowering plants to achieve self-fertilization). This Brassica oleracea (Wild cabbage) protein is S-locus-specific glycoprotein S6 (SLSG).